Here is a 617-residue protein sequence, read N- to C-terminus: Dihydroxy-acid dehydratase (617 aa).

Residue Asp82 participates in Mg(2+) binding. Cys123 contributes to the [2Fe-2S] cluster binding site. Mg(2+) is bound by residues Asp124 and Lys125. An N6-carboxylysine modification is found at Lys125. Cys197 provides a ligand contact to [2Fe-2S] cluster. A Mg(2+)-binding site is contributed by Glu497. The Proton acceptor role is filled by Ser523.

The protein belongs to the IlvD/Edd family. As to quaternary structure, homodimer. [2Fe-2S] cluster serves as cofactor. Mg(2+) is required as a cofactor.

The catalysed reaction is (2R)-2,3-dihydroxy-3-methylbutanoate = 3-methyl-2-oxobutanoate + H2O. It catalyses the reaction (2R,3R)-2,3-dihydroxy-3-methylpentanoate = (S)-3-methyl-2-oxopentanoate + H2O. Its pathway is amino-acid biosynthesis; L-isoleucine biosynthesis; L-isoleucine from 2-oxobutanoate: step 3/4. It participates in amino-acid biosynthesis; L-valine biosynthesis; L-valine from pyruvate: step 3/4. Functions in the biosynthesis of branched-chain amino acids. Catalyzes the dehydration of (2R,3R)-2,3-dihydroxy-3-methylpentanoate (2,3-dihydroxy-3-methylvalerate) into 2-oxo-3-methylpentanoate (2-oxo-3-methylvalerate) and of (2R)-2,3-dihydroxy-3-methylbutanoate (2,3-dihydroxyisovalerate) into 2-oxo-3-methylbutanoate (2-oxoisovalerate), the penultimate precursor to L-isoleucine and L-valine, respectively. The protein is Dihydroxy-acid dehydratase of Streptomyces avermitilis (strain ATCC 31267 / DSM 46492 / JCM 5070 / NBRC 14893 / NCIMB 12804 / NRRL 8165 / MA-4680).